The chain runs to 829 residues: Spindle-defective protein 2 (829 aa).

Disordered regions lie at residues 1–29 (MNED…DGES), 41–104 (EDED…SNDI), 183–294 (KKDV…TTSD), and 326–471 (RKKR…NGHM). Basic and acidic residues predominate over residues 54 to 82 (FRLENRYKPSLHTPRELPTIREENREDVR). Polar residues predominate over residues 83–93 (SNTSSRVNTRP). Residues 183-216 (KKDVTRKQENVRPGKMMPEKVNDENEPKSRRFSP) show a composition bias toward basic and acidic residues. Polar residues-rich tracts occupy residues 217–230 (ERNT…NSTK) and 266–294 (PQRT…TTSD). Residues 314-332 (VDINLLTALENARKKRDRP) are a coiled coil. 2 stretches are compositionally biased toward low complexity: residues 361–370 (SMTSIVSSST) and 384–408 (NSAT…RVST). Polar residues-rich tracts occupy residues 409–439 (AKND…NSMT) and 448–463 (SVSS…STMT).

The protein resides in the cytoplasm. It is found in the cytoskeleton. Its subcellular location is the microtubule organizing center. The protein localises to the centrosome. It localises to the centriole. In terms of biological role, required both for centrosome duplication and maturation. Required for pericentriolar material (PCM) recruitment. The chain is Spindle-defective protein 2 from Caenorhabditis briggsae.